The primary structure comprises 155 residues: Small ribosomal subunit protein uS7 (155 aa).

Belongs to the universal ribosomal protein uS7 family. In terms of assembly, part of the 30S ribosomal subunit. Contacts proteins S9 and S11.

One of the primary rRNA binding proteins, it binds directly to 16S rRNA where it nucleates assembly of the head domain of the 30S subunit. Is located at the subunit interface close to the decoding center, probably blocks exit of the E-site tRNA. The protein is Small ribosomal subunit protein uS7 of Helicobacter hepaticus (strain ATCC 51449 / 3B1).